Here is a 364-residue protein sequence, read N- to C-terminus: UDP-N-acetylglucosamine--N-acetylmuramyl-(pentapeptide) pyrophosphoryl-undecaprenol N-acetylglucosamine transferase (364 aa).

Residues 10-12 (TGG), N124, R166, S196, and Q297 contribute to the UDP-N-acetyl-alpha-D-glucosamine site.

The protein belongs to the glycosyltransferase 28 family. MurG subfamily.

It is found in the cell membrane. It catalyses the reaction di-trans,octa-cis-undecaprenyl diphospho-N-acetyl-alpha-D-muramoyl-L-alanyl-D-glutamyl-meso-2,6-diaminopimeloyl-D-alanyl-D-alanine + UDP-N-acetyl-alpha-D-glucosamine = di-trans,octa-cis-undecaprenyl diphospho-[N-acetyl-alpha-D-glucosaminyl-(1-&gt;4)]-N-acetyl-alpha-D-muramoyl-L-alanyl-D-glutamyl-meso-2,6-diaminopimeloyl-D-alanyl-D-alanine + UDP + H(+). It participates in cell wall biogenesis; peptidoglycan biosynthesis. Functionally, cell wall formation. Catalyzes the transfer of a GlcNAc subunit on undecaprenyl-pyrophosphoryl-MurNAc-pentapeptide (lipid intermediate I) to form undecaprenyl-pyrophosphoryl-MurNAc-(pentapeptide)GlcNAc (lipid intermediate II). In Caldanaerobacter subterraneus subsp. tengcongensis (strain DSM 15242 / JCM 11007 / NBRC 100824 / MB4) (Thermoanaerobacter tengcongensis), this protein is UDP-N-acetylglucosamine--N-acetylmuramyl-(pentapeptide) pyrophosphoryl-undecaprenol N-acetylglucosamine transferase.